The following is a 345-amino-acid chain: Anthranilate phosphoribosyltransferase (345 aa).

5-phospho-alpha-D-ribose 1-diphosphate-binding positions include Gly81, 84 to 85, Ser89, 91 to 94, 109 to 117, and Ala121; these read GD, NVST, and KHGNRAATS. Anthranilate is bound at residue Gly81. Position 93 (Ser93) interacts with Mg(2+). Asn112 provides a ligand contact to anthranilate. Arg167 is an anthranilate binding site. Residues Asp226 and Glu227 each contribute to the Mg(2+) site.

It belongs to the anthranilate phosphoribosyltransferase family. In terms of assembly, homodimer. Requires Mg(2+) as cofactor.

It carries out the reaction N-(5-phospho-beta-D-ribosyl)anthranilate + diphosphate = 5-phospho-alpha-D-ribose 1-diphosphate + anthranilate. The protein operates within amino-acid biosynthesis; L-tryptophan biosynthesis; L-tryptophan from chorismate: step 2/5. In terms of biological role, catalyzes the transfer of the phosphoribosyl group of 5-phosphorylribose-1-pyrophosphate (PRPP) to anthranilate to yield N-(5'-phosphoribosyl)-anthranilate (PRA). The protein is Anthranilate phosphoribosyltransferase of Methylobacterium radiotolerans (strain ATCC 27329 / DSM 1819 / JCM 2831 / NBRC 15690 / NCIMB 10815 / 0-1).